Reading from the N-terminus, the 548-residue chain is Chaperonin GroEL (548 aa).

ATP contacts are provided by residues Thr-30 to Pro-33, Lys-51, Asp-87 to Thr-91, Gly-415, Asn-479 to Ala-481, and Asp-495.

It belongs to the chaperonin (HSP60) family. As to quaternary structure, forms a cylinder of 14 subunits composed of two heptameric rings stacked back-to-back. Interacts with the co-chaperonin GroES.

Its subcellular location is the cytoplasm. It carries out the reaction ATP + H2O + a folded polypeptide = ADP + phosphate + an unfolded polypeptide.. Functionally, together with its co-chaperonin GroES, plays an essential role in assisting protein folding. The GroEL-GroES system forms a nano-cage that allows encapsulation of the non-native substrate proteins and provides a physical environment optimized to promote and accelerate protein folding. In Salmonella gallinarum (strain 287/91 / NCTC 13346), this protein is Chaperonin GroEL.